The sequence spans 348 residues: Transmembrane protease serine 12 (348 aa).

Positions 1 to 20 (MRLGLLSVALLFVGSSHLYS) are cleaved as a signal peptide. At 21–324 (DHYSPSGRHR…EHFFHASTQG (304 aa)) the chain is on the extracellular side. The disordered stretch occupies residues 24–46 (SPSGRHRLGPSPEPAASSQQAEA). One can recognise a Peptidase S1 domain in the interval 78-318 (IIGGTEAQAG…YQKWLTEHFF (241 aa)). Cys-107 and Cys-123 are joined by a disulfide. Residues His-122 and Asp-171 each act as charge relay system in the active site. 3 disulfides stabilise this stretch: Cys-206–Cys-274, Cys-237–Cys-253, and Cys-264–Cys-294. Residues Asn-219 and Asn-249 are each glycosylated (N-linked (GlcNAc...) asparagine). Ser-268 serves as the catalytic Charge relay system. A helical membrane pass occupies residues 325–345 (ILTINILRGQILIALCFVILL). Residues 346–348 (ATT) are Cytoplasmic-facing.

Belongs to the peptidase S1 family. As to expression, in testis, expressed in spermatocytes and spermatids (at protein level).

It is found in the cell membrane. The protein localises to the cytoplasmic vesicle. It localises to the secretory vesicle. The protein resides in the acrosome. Its function is as follows. Required for male fertility. Plays a critical role in sperm capacitation and acrosome reactions during fertilization, and also plays a role in the regulation of proteins involved in spermatogenesis. Regulates protein pathways that promote chromosomal synapsis formation, double-strand break repair, formation of the inner mitochondrial membrane cristae and apoptosis in developing sperm. Required for normal sperm motility and binding to the zona pellucida, potentially via a role in ADAM3 protein maturation. In Homo sapiens (Human), this protein is Transmembrane protease serine 12.